Here is a 378-residue protein sequence, read N- to C-terminus: Histidinol-phosphate aminotransferase (378 aa).

The tract at residues 1-20 (MSVSAKETQRHPARPEPRPG) is disordered. A compositionally biased stretch (basic and acidic residues) spans 7–17 (ETQRHPARPEP). Lys232 carries the N6-(pyridoxal phosphate)lysine modification.

This sequence belongs to the class-II pyridoxal-phosphate-dependent aminotransferase family. Histidinol-phosphate aminotransferase subfamily. In terms of assembly, homodimer. Requires pyridoxal 5'-phosphate as cofactor.

It catalyses the reaction L-histidinol phosphate + 2-oxoglutarate = 3-(imidazol-4-yl)-2-oxopropyl phosphate + L-glutamate. Its pathway is amino-acid biosynthesis; L-histidine biosynthesis; L-histidine from 5-phospho-alpha-D-ribose 1-diphosphate: step 7/9. This chain is Histidinol-phosphate aminotransferase, found in Azorhizobium caulinodans (strain ATCC 43989 / DSM 5975 / JCM 20966 / LMG 6465 / NBRC 14845 / NCIMB 13405 / ORS 571).